Consider the following 170-residue polypeptide: Adenine phosphoribosyltransferase (170 aa).

Belongs to the purine/pyrimidine phosphoribosyltransferase family. In terms of assembly, homodimer.

Its subcellular location is the cytoplasm. It carries out the reaction AMP + diphosphate = 5-phospho-alpha-D-ribose 1-diphosphate + adenine. Its pathway is purine metabolism; AMP biosynthesis via salvage pathway; AMP from adenine: step 1/1. In terms of biological role, catalyzes a salvage reaction resulting in the formation of AMP, that is energically less costly than de novo synthesis. In Mesoplasma florum (strain ATCC 33453 / NBRC 100688 / NCTC 11704 / L1) (Acholeplasma florum), this protein is Adenine phosphoribosyltransferase.